We begin with the raw amino-acid sequence, 543 residues long: MKQTKYIFVTGGVLSSLGKGIAAASIATLLKNSGLKVSILKADPYINVDPGTMSPFEHGEVFVTDDGAETDLDLGHYERFLDESLSQDNNFTTGRVYQSVIEKERRGEYLGKTIQVIPHIVGEIKDRIKKAGEGKDILIVEIGGTVGDIEGLPFLEAIRALRLEVGKNNAMNIHLTLVPFIKAAGELKTKPTQHSVGELRRIGISPDMIICRSEKALDRDLKDKIAISCGVEKNCVIESVDAASIYQIPLNFLKQDILSPIAEILDLKNLKPNMENWDSLVKRVIAPSNEVKIAFVGKYVDLKESYKSLTEAIIHAGAALDTKVELKWVDSEKLENMESSEVFKDVSGILVAGGFGYRGVEGKIKAIQYARENKIPFLGICLGMQLALVEFARNVLKLKDVNSSEFNEKCQNPVVYLIDEFMDTNGEKQIRTAKTPLGGTMRLGAYKCDIKEKSLLAKVYNEVKSVKERHRHRYEANPKYRADFEKYGLIVSGESKGLIEAVELNCHPFFLAVQFHPEFTSRLEHVNPVICSFIKAAINYEDN.

The tract at residues 1 to 267 is amidoligase domain; it reads MKQTKYIFVT…LSPIAEILDL (267 aa). Ser15 is a CTP binding site. Ser15 provides a ligand contact to UTP. ATP contacts are provided by residues 16 to 21 and Asp73; that span reads SLGKGI. Mg(2+) contacts are provided by Asp73 and Glu141. Residues 148–150, 188–193, and Lys224 contribute to the CTP site; these read DIE and KTKPTQ. Residues 188 to 193 and Lys224 contribute to the UTP site; that span reads KTKPTQ. Residues 292 to 543 enclose the Glutamine amidotransferase type-1 domain; sequence KIAFVGKYVD…IKAAINYEDN (252 aa). Gly354 contacts L-glutamine. Residue Cys381 is the Nucleophile; for glutamine hydrolysis of the active site. Residues 382–385, Glu405, and Arg473 each bind L-glutamine; that span reads LGMQ. Residues His516 and Glu518 contribute to the active site.

This sequence belongs to the CTP synthase family. In terms of assembly, homotetramer.

It catalyses the reaction UTP + L-glutamine + ATP + H2O = CTP + L-glutamate + ADP + phosphate + 2 H(+). The enzyme catalyses L-glutamine + H2O = L-glutamate + NH4(+). It carries out the reaction UTP + NH4(+) + ATP = CTP + ADP + phosphate + 2 H(+). The protein operates within pyrimidine metabolism; CTP biosynthesis via de novo pathway; CTP from UDP: step 2/2. With respect to regulation, allosterically activated by GTP, when glutamine is the substrate; GTP has no effect on the reaction when ammonia is the substrate. The allosteric effector GTP functions by stabilizing the protein conformation that binds the tetrahedral intermediate(s) formed during glutamine hydrolysis. Inhibited by the product CTP, via allosteric rather than competitive inhibition. Its function is as follows. Catalyzes the ATP-dependent amination of UTP to CTP with either L-glutamine or ammonia as the source of nitrogen. Regulates intracellular CTP levels through interactions with the four ribonucleotide triphosphates. The polypeptide is CTP synthase (Campylobacter jejuni subsp. jejuni serotype O:2 (strain ATCC 700819 / NCTC 11168)).